Here is a 118-residue protein sequence, read N- to C-terminus: V-type proton ATPase subunit G 2 (118 aa).

The interval 23-91 (ADARKRKARR…QGMQSSQQRN (69 aa)) is disordered. Residues 35–55 (QAKEEAQMEVEQYRREREQEF) show a composition bias toward basic and acidic residues. Composition is skewed to polar residues over residues 56–69 (QSKQ…QGNL) and 78–89 (RRQVQGMQSSQQ).

The protein belongs to the V-ATPase G subunit family. V-ATPase is a heteromultimeric enzyme made up of two complexes: the ATP-hydrolytic V1 complex and the proton translocation V0 complex. The V1 complex consists of three catalytic AB heterodimers that form a heterohexamer, three peripheral stalks each consisting of EG heterodimers, one central rotor including subunits D and F, and the regulatory subunits C and H. The proton translocation complex V0 consists of the proton transport subunit a, a ring of proteolipid subunits c9c'', rotary subunit d, subunits e and f, and the accessory subunits ATP6AP1/Ac45 and ATP6AP2/PRR.

The protein localises to the melanosome. It is found in the cytoplasmic vesicle. Its subcellular location is the clathrin-coated vesicle membrane. Functionally, subunit of the V1 complex of vacuolar(H+)-ATPase (V-ATPase), a multisubunit enzyme composed of a peripheral complex (V1) that hydrolyzes ATP and a membrane integral complex (V0) that translocates protons. V-ATPase is responsible for acidifying and maintaining the pH of intracellular compartments and in some cell types, is targeted to the plasma membrane, where it is responsible for acidifying the extracellular environment. In Mus musculus (Mouse), this protein is V-type proton ATPase subunit G 2 (Atp6v1g2).